A 391-amino-acid chain; its full sequence is Phosphoglycerate kinase (391 aa).

Substrate contacts are provided by residues 21–23 (DLN), Arg-36, 59–62 (HLGR), Arg-113, and Arg-146. Residues Lys-197, Glu-319, and 345–348 (GGDT) contribute to the ATP site.

The protein belongs to the phosphoglycerate kinase family. In terms of assembly, monomer.

It localises to the cytoplasm. The enzyme catalyses (2R)-3-phosphoglycerate + ATP = (2R)-3-phospho-glyceroyl phosphate + ADP. It participates in carbohydrate degradation; glycolysis; pyruvate from D-glyceraldehyde 3-phosphate: step 2/5. The protein is Phosphoglycerate kinase of Shewanella halifaxensis (strain HAW-EB4).